The sequence spans 525 residues: Matrix extracellular phosphoglycoprotein (525 aa).

Residues 1–17 form the signal peptide; that stretch reads MRVFCVGLLLFSVTWAA. Disordered regions lie at residues 24–95, 187–216, and 237–525; these read TEKT…NRQR, AKAH…THRI, and EGSG…SDGD. 2 stretches are compositionally biased toward basic and acidic residues: residues 25–46 and 64–73; these read EKTK…DNIG and IVQERKKDLS. Composition is skewed to polar residues over residues 75–95 and 200–210; these read SEAS…NRQR and DSQAQKSPVKS. The interval 242 to 264 is dentonin; it reads TDLQERGDNDISPFSGDGQPFKD. The short motif at 247-249 is the Cell attachment site element; the sequence is RGD. Residue S256 is glycosylated (O-linked (Xyl...) (chondroitin sulfate) serine). Composition is skewed to basic and acidic residues over residues 292-312 and 319-328; these read ESTH…REEN and TRDETAKEAD. N-linked (GlcNAc...) asparagine glycosylation is found at N477 and N478. The tract at residues 507–525 is ASARM motif; interaction with PHEX; sequence RDDSSESSDSGSSSESDGD. Over residues 513 to 525 the composition is skewed to low complexity; it reads SSDSGSSSESDGD.

Belongs to the PF07175/osteoregulin family. As to quaternary structure, interacts (via the ASARM motif) with PHEX; the interaction is zinc-dependent. In terms of processing, phosphorylated on serine residues in the ASARM motif (in vitro) by FAM20C; the phosphorylation is important for the inhibition of bone mineralization. Cleaved by CTSB/cathepsin B; the cleavage is blocked by metalloprotease PHEX. Detected in urine (at protein level). Expressed by osteoblasts. Expressed by stem cells in dental pulp. Expressed by mesenchymal cells in dental papilla and dental pulp. Expressed in teeth, specifically in decidious dentin. Expressed in ondotoblasts. Expressed in salivary glands. Secreted from oncogenic hypophosphatemic tumors.

The protein resides in the secreted. Its subcellular location is the extracellular space. It is found in the extracellular matrix. Its function is as follows. Promotes renal phosphate excretion and inhibits intestinal phosphate absorption. Promotes bone mineralization by osteoblasts and cartilage mineralization by chondrocytes. Regulates the mineralization of the extracellular matrix of the craniofacial complex, such as teeth, bone and cartilage. Promotes dental pulp stem cell proliferation and differentiation. The chain is Matrix extracellular phosphoglycoprotein (MEPE) from Homo sapiens (Human).